Reading from the N-terminus, the 568-residue chain is Sphingosine-1-phosphate lyase 1 (568 aa).

Over 1 to 40 (MPGTDLLKLKDFEPYLEILESYSTKAKNYVNGYCTKYEPW) the chain is Lumenal. Residues 41–61 (QLIAWSVLCTLLIVWVYELIF) traverse the membrane as a helical; Signal-anchor for type III membrane protein segment. The Cytoplasmic segment spans residues 62–568 (QPESLWSRFK…NQMNGSPKPR (507 aa)). The residue at position 353 (Lys-353) is an N6-(pyridoxal phosphate)lysine; alternate. Residue Lys-353 is modified to N6-acetyllysine; alternate. 2 positions are modified to 3'-nitrotyrosine: Tyr-356 and Tyr-366. Ser-564 is modified (phosphoserine).

Belongs to the group II decarboxylase family. Sphingosine-1-phosphate lyase subfamily. Pyridoxal 5'-phosphate is required as a cofactor. As to expression, highest levels are found in liver, small intestine and thymus, followed by kidney, lung, heart, spleen and brain (at protein level). Also detected in stomach, testis and skeletal muscle (at protein level).

It is found in the endoplasmic reticulum membrane. The catalysed reaction is sphinganine 1-phosphate = hexadecanal + phosphoethanolamine. The enzyme catalyses sphing-4-enine 1-phosphate = (2E)-hexadecenal + phosphoethanolamine. Its pathway is lipid metabolism; sphingolipid metabolism. Functionally, cleaves phosphorylated sphingoid bases (PSBs), such as sphingosine-1-phosphate, into fatty aldehydes and phosphoethanolamine. Elevates stress-induced ceramide production and apoptosis. Required for global lipid homeostasis in liver and cholesterol homeostasis in fibroblasts. Involved in the regulation of pro-inflammatory response and neutrophil trafficking. Modulates neuronal autophagy via phosphoethanolamine production which regulates accumulation of aggregate-prone proteins such as APP. Seems to play a role in establishing neuronal contact sites and axonal maintenance. The chain is Sphingosine-1-phosphate lyase 1 from Mus musculus (Mouse).